The primary structure comprises 547 residues: MSSSILNNRSARSTPAGANPAFNPPAEASSSSTQSGVPYIRENSPEAESIPSNPAMTPIITHGDSLASPGGRNSEADTVVPLQPAVSQDAIRSRPGSRTGNFVTPKAARFSQDGAEPIMQYSSGSVKSARRRTREREDYDFDQAADYAPMSEYERYYRNEGRNDRDRYTRRGPYPPPTFMNRRRAPPLDSDEEFYSSDDPRIPPNDRRRMMDEEAGYPGRPHAFRRTSTLNGFNITTGKLQWNELSRQEKSEIMRLPLTQWMNSNFKNHFVAGVGEFIGTTMFLFFAFAGTEVANIQADTTNRTTTGESTGSLNVSKLLYISIIFGFSLMVNVWVFFRISGGLFNPAVTMAMLMVKAISVTRAIVLFLAQILGSMLASVVVRYLFPETFNVRTTLGGGASLVQGVFIEALLTAELVFTIFMLAKEKHRATFIAPVGIGLALFIAEMVGVQFTGGSLNPARSFGPCVITGSFDTEHWIYWVGPAIGSLIAVCFYWFIKTLEYEMANPGADGDDLNDPTKNPEKRAEIQASKPVPTAAFGSGKTASILS.

The segment covering 1–13 (MSSSILNNRSARS) has biased composition (polar residues). Residues 1–208 (MSSSILNNRS…DPRIPPNDRR (208 aa)) are disordered. Over 1–269 (MSSSILNNRS…QWMNSNFKNH (269 aa)) the chain is Cytoplasmic. Low complexity predominate over residues 15-32 (PAGANPAFNPPAEASSSS). 2 stretches are compositionally biased toward basic and acidic residues: residues 152–169 (EYERYYRNEGRNDRDRYT) and 198–208 (DDPRIPPNDRR). The helical transmembrane segment at 270-290 (FVAGVGEFIGTTMFLFFAFAG) threads the bilayer. The Extracellular segment spans residues 291–316 (TEVANIQADTTNRTTTGESTGSLNVS). N-linked (GlcNAc...) asparagine glycosylation is found at Asn302 and Asn314. Residues 317-337 (KLLYISIIFGFSLMVNVWVFF) form a helical membrane-spanning segment. The Cytoplasmic portion of the chain corresponds to 338 to 363 (RISGGLFNPAVTMAMLMVKAISVTRA). Residues 345 to 347 (NPA) carry the NPA 1 motif. The chain crosses the membrane as a helical span at residues 364–384 (IVLFLAQILGSMLASVVVRYL). The Extracellular segment spans residues 385 to 400 (FPETFNVRTTLGGGAS). The helical transmembrane segment at 401–421 (LVQGVFIEALLTAELVFTIFM) threads the bilayer. Topologically, residues 422–428 (LAKEKHR) are cytoplasmic. A helical transmembrane segment spans residues 429–449 (ATFIAPVGIGLALFIAEMVGV). The Extracellular segment spans residues 450–475 (QFTGGSLNPARSFGPCVITGSFDTEH). Positions 457-459 (NPA) match the NPA 2 motif. A helical membrane pass occupies residues 476–496 (WIYWVGPAIGSLIAVCFYWFI). The Cytoplasmic segment spans residues 497–547 (KTLEYEMANPGADGDDLNDPTKNPEKRAEIQASKPVPTAAFGSGKTASILS). The tract at residues 510–547 (GDDLNDPTKNPEKRAEIQASKPVPTAAFGSGKTASILS) is disordered.

Belongs to the MIP/aquaporin (TC 1.A.8) family.

It is found in the membrane. It carries out the reaction H2O(in) = H2O(out). Probable water channel that may have redundant functions with FgAQP3. The chain is Probable aquaporin-5 from Gibberella zeae (strain ATCC MYA-4620 / CBS 123657 / FGSC 9075 / NRRL 31084 / PH-1) (Wheat head blight fungus).